The sequence spans 295 residues: Protein PHR1-LIKE 2 (295 aa).

Residues 38–98 (TDPKPRLRWT…HLQKFRLGRQ (61 aa)) form the HTH myb-type domain. A DNA-binding region (H-T-H motif) is located at residues 69 to 94 (PKTIMRTMGVKGLTLYHLKSHLQKFR). The segment at 96 to 138 (GRQAGKESTENSKDASCVGESQDTGSSSTSSMRMAQQEQNEGY) is disordered. Basic and acidic residues predominate over residues 99-108 (AGKESTENSK). Over residues 127-138 (MRMAQQEQNEGY) the composition is skewed to polar residues. A coiled-coil region spans residues 141–161 (TEALRAQMEVQRRLHDQLEVQ). An LHEQLE motif is present at residues 154–159 (LHDQLE).

This sequence belongs to the MYB-CC family. As to quaternary structure, homo- and heterodimers. Interacts with PHL3, but not with PHR1.

It is found in the nucleus. Its function is as follows. Transcriptional activator. Acts redundantly with PHR1 as a key component of the central regulatory system controlling transcriptional responses to Pi starvation. Binds in a sequence-specific manner to phosphate starvation-regulated promoters. This chain is Protein PHR1-LIKE 2, found in Arabidopsis thaliana (Mouse-ear cress).